A 245-amino-acid polypeptide reads, in one-letter code: MKVEDYFHDILRERKIHLTLIDPEEQTPEEAVEIARAAIRGGTDGIMLGGSTTDSSELDNTARALRENIDVPIILFPGNTTGVSRYADAIFFMSLLNSTNPYWIIGAQALGAATVKKMGIEALPMGYLVVEPGGTVGWVGDTKPVPRNKPDIAAAYAMAAEFLGMRLFYLEAGSGAPEHVPEEMIALVKRCTDQILIVGGGIRSGEDAARVAGAGADVVVTGTVVENSDNVEDKIREIVEGMGSV.

Residues Asp22 and Ser51 each contribute to the Mg(2+) site. Residues 169-175, 200-201, and 222-223 each bind sn-glycerol 1-phosphate; these read YLEAGSG, GG, and GT.

This sequence belongs to the GGGP/HepGP synthase family. Group II subfamily. Homotetramer. Homohexamer. It depends on Mg(2+) as a cofactor.

It is found in the cytoplasm. It carries out the reaction sn-glycerol 1-phosphate + (2E,6E,10E)-geranylgeranyl diphosphate = sn-3-O-(geranylgeranyl)glycerol 1-phosphate + diphosphate. The protein operates within membrane lipid metabolism; glycerophospholipid metabolism. Its function is as follows. Prenyltransferase that catalyzes the transfer of the geranylgeranyl moiety of geranylgeranyl diphosphate (GGPP) to the C3 hydroxyl of sn-glycerol-1-phosphate (G1P). This reaction is the first ether-bond-formation step in the biosynthesis of archaeal membrane lipids. The protein is Geranylgeranylglyceryl phosphate synthase of Methanothermobacter thermautotrophicus (strain ATCC 29096 / DSM 1053 / JCM 10044 / NBRC 100330 / Delta H) (Methanobacterium thermoautotrophicum).